The chain runs to 155 residues: Ribosomal RNA large subunit methyltransferase H (155 aa).

S-adenosyl-L-methionine is bound by residues leucine 73, glycine 104, and 123–128 (LSALTL).

This sequence belongs to the RNA methyltransferase RlmH family. As to quaternary structure, homodimer.

Its subcellular location is the cytoplasm. The catalysed reaction is pseudouridine(1915) in 23S rRNA + S-adenosyl-L-methionine = N(3)-methylpseudouridine(1915) in 23S rRNA + S-adenosyl-L-homocysteine + H(+). In terms of biological role, specifically methylates the pseudouridine at position 1915 (m3Psi1915) in 23S rRNA. The sequence is that of Ribosomal RNA large subunit methyltransferase H from Saccharophagus degradans (strain 2-40 / ATCC 43961 / DSM 17024).